Here is a 293-residue protein sequence, read N- to C-terminus: Protease HtpX (293 aa).

The next 2 helical transmembrane spans lie at 4-24 (ISLFLLTNLAVMVVFGIVLSL) and 33-53 (AGLMIMAGLFGFGGAFVSLLM). His139 is a binding site for Zn(2+). The active site involves Glu140. His143 serves as a coordination point for Zn(2+). Transmembrane regions (helical) follow at residues 158-178 (VVNTFVIFISRILAQLAAGFM) and 193-213 (LVYFAVSMVLELVFGVLASII). Position 222 (Glu222) interacts with Zn(2+).

The protein belongs to the peptidase M48B family. Zn(2+) serves as cofactor.

It is found in the cell inner membrane. The polypeptide is Protease HtpX (Sodalis glossinidius (strain morsitans)).